Reading from the N-terminus, the 860-residue chain is Leucine--tRNA ligase (860 aa).

Positions 42–52 match the 'HIGH' region motif; sequence PYPSGRLHMGH. Residues 619–623 carry the 'KMSKS' region motif; it reads KMSKS. Residue Lys-622 coordinates ATP.

It belongs to the class-I aminoacyl-tRNA synthetase family.

Its subcellular location is the cytoplasm. It catalyses the reaction tRNA(Leu) + L-leucine + ATP = L-leucyl-tRNA(Leu) + AMP + diphosphate. The polypeptide is Leucine--tRNA ligase (Escherichia coli O6:K15:H31 (strain 536 / UPEC)).